We begin with the raw amino-acid sequence, 205 residues long: Pyridoxal 5'-phosphate synthase subunit PdxT (205 aa).

53–55 (GES) lines the L-glutamine pocket. Residue C85 is the Nucleophile of the active site. Residues R112 and 140–141 (IR) contribute to the L-glutamine site. Catalysis depends on charge relay system residues H176 and E178.

The protein belongs to the glutaminase PdxT/SNO family. In terms of assembly, in the presence of PdxS, forms a dodecamer of heterodimers. Only shows activity in the heterodimer.

The catalysed reaction is aldehydo-D-ribose 5-phosphate + D-glyceraldehyde 3-phosphate + L-glutamine = pyridoxal 5'-phosphate + L-glutamate + phosphate + 3 H2O + H(+). It carries out the reaction L-glutamine + H2O = L-glutamate + NH4(+). It functions in the pathway cofactor biosynthesis; pyridoxal 5'-phosphate biosynthesis. Its function is as follows. Catalyzes the hydrolysis of glutamine to glutamate and ammonia as part of the biosynthesis of pyridoxal 5'-phosphate. The resulting ammonia molecule is channeled to the active site of PdxS. The polypeptide is Pyridoxal 5'-phosphate synthase subunit PdxT (Haloquadratum walsbyi (strain DSM 16790 / HBSQ001)).